A 268-amino-acid chain; its full sequence is NAD kinase (268 aa).

The active-site Proton acceptor is the D45. NAD(+)-binding positions include 45-46, 122-123, R148, D150, 161-166, A185, and Q223; these read DG, NE, and TAYGKS.

The protein belongs to the NAD kinase family. A divalent metal cation serves as cofactor.

It is found in the cytoplasm. It catalyses the reaction NAD(+) + ATP = ADP + NADP(+) + H(+). In terms of biological role, involved in the regulation of the intracellular balance of NAD and NADP, and is a key enzyme in the biosynthesis of NADP. Catalyzes specifically the phosphorylation on 2'-hydroxyl of the adenosine moiety of NAD to yield NADP. The sequence is that of NAD kinase from Latilactobacillus sakei subsp. sakei (strain 23K) (Lactobacillus sakei subsp. sakei).